We begin with the raw amino-acid sequence, 449 residues long: XK-related protein 2 (449 aa).

A run of 10 helical transmembrane segments spans residues Phe35–Val55, Thr68–Val88, Leu98–Ile118, Ile174–Ser194, Leu204–Ile224, Leu241–Phe261, Ala269–Trp289, Val306–Cys326, Leu357–Asn377, and Leu382–Phe402.

This sequence belongs to the XK family.

It is found in the membrane. The chain is XK-related protein 2 (Xkrx) from Mus musculus (Mouse).